The sequence spans 514 residues: Probable lysine--tRNA ligase, cytoplasmic (514 aa).

The protein belongs to the class-II aminoacyl-tRNA synthetase family. As to quaternary structure, homodimer.

It is found in the cytoplasm. It carries out the reaction tRNA(Lys) + L-lysine + ATP = L-lysyl-tRNA(Lys) + AMP + diphosphate. In Vairimorpha ceranae (strain BRL01) (Microsporidian parasite), this protein is Probable lysine--tRNA ligase, cytoplasmic.